The chain runs to 212 residues: Adenylate kinase (212 aa).

Residue 10-15 coordinates ATP; it reads GAGKGT. Positions 30–59 are NMP; that stretch reads STGDMFRAAMANQTEMGRLAKSYIDKGELV. AMP-binding positions include Thr31, Arg36, 57–59, 86–89, and Gln93; these read ELV and GYPR. Residues 127–159 form an LID region; the sequence is GRIINRKTGETFHKVFNPPVDYKEEDYYQREDD. Residues Arg128 and 137–138 contribute to the ATP site; that span reads TF. 2 residues coordinate AMP: Arg156 and Arg167. Gln195 is a binding site for ATP.

It belongs to the adenylate kinase family. In terms of assembly, monomer.

It localises to the cytoplasm. The enzyme catalyses AMP + ATP = 2 ADP. It functions in the pathway purine metabolism; AMP biosynthesis via salvage pathway; AMP from ADP: step 1/1. In terms of biological role, catalyzes the reversible transfer of the terminal phosphate group between ATP and AMP. Plays an important role in cellular energy homeostasis and in adenine nucleotide metabolism. The chain is Adenylate kinase from Streptococcus pyogenes serotype M1.